A 943-amino-acid chain; its full sequence is Isoleucine--tRNA ligase 1 (943 aa).

Residues 58–68 (PYANGTIHIGH) carry the 'HIGH' region motif. Position 567 (Glu567) interacts with L-isoleucyl-5'-AMP. Residues 608–612 (KMSKS) carry the 'KMSKS' region motif. Lys611 contributes to the ATP binding site. Zn(2+)-binding residues include Cys906, Cys909, Cys926, and Cys929.

The protein belongs to the class-I aminoacyl-tRNA synthetase family. IleS type 1 subfamily. In terms of assembly, monomer. It depends on Zn(2+) as a cofactor.

It localises to the cytoplasm. The enzyme catalyses tRNA(Ile) + L-isoleucine + ATP = L-isoleucyl-tRNA(Ile) + AMP + diphosphate. Catalyzes the attachment of isoleucine to tRNA(Ile). As IleRS can inadvertently accommodate and process structurally similar amino acids such as valine, to avoid such errors it has two additional distinct tRNA(Ile)-dependent editing activities. One activity is designated as 'pretransfer' editing and involves the hydrolysis of activated Val-AMP. The other activity is designated 'posttransfer' editing and involves deacylation of mischarged Val-tRNA(Ile). In terms of biological role, confers resistance to the antibiotic mupirocin (pseudomonic acid A), an Ile-analog produced by P.fluorescens NCIMB 10586 itself that competitively inhibits activation by Ile-tRNA synthetase, thus inhibiting protein biosynthesis. The protein is Isoleucine--tRNA ligase 1 (ileS1) of Pseudomonas fluorescens.